Reading from the N-terminus, the 220-residue chain is ATP-dependent Clp protease proteolytic subunit (220 aa).

The Nucleophile role is filled by S125. The active site involves H150.

This sequence belongs to the peptidase S14 family. Fourteen ClpP subunits assemble into 2 heptameric rings which stack back to back to give a disk-like structure with a central cavity, resembling the structure of eukaryotic proteasomes.

Its subcellular location is the cytoplasm. The catalysed reaction is Hydrolysis of proteins to small peptides in the presence of ATP and magnesium. alpha-casein is the usual test substrate. In the absence of ATP, only oligopeptides shorter than five residues are hydrolyzed (such as succinyl-Leu-Tyr-|-NHMec, and Leu-Tyr-Leu-|-Tyr-Trp, in which cleavage of the -Tyr-|-Leu- and -Tyr-|-Trp bonds also occurs).. Cleaves peptides in various proteins in a process that requires ATP hydrolysis. Has a chymotrypsin-like activity. Plays a major role in the degradation of misfolded proteins. In Bacteroides thetaiotaomicron (strain ATCC 29148 / DSM 2079 / JCM 5827 / CCUG 10774 / NCTC 10582 / VPI-5482 / E50), this protein is ATP-dependent Clp protease proteolytic subunit.